The sequence spans 294 residues: Maltose/maltodextrin import ATP-binding protein MalK (294 aa).

One can recognise an ABC transporter domain in the interval valine 4–isoleucine 233. Glycine 36–serine 43 contacts ATP.

This sequence belongs to the ABC transporter superfamily. Maltooligosaccharide importer (TC 3.A.1.1.1) family. As to quaternary structure, the complex is composed of two ATP-binding proteins (MalK), two transmembrane proteins (MalG and MalK) and a solute-binding protein (MalE).

The protein resides in the cell inner membrane. It carries out the reaction D-maltose(out) + ATP + H2O = D-maltose(in) + ADP + phosphate + H(+). Its function is as follows. Part of the ABC transporter complex MalEFGK involved in maltose/maltodextrin import. Responsible for energy coupling to the transport system. This is Maltose/maltodextrin import ATP-binding protein MalK from Klebsiella aerogenes (Enterobacter aerogenes).